The chain runs to 56 residues: ComX pheromone (56 aa).

A propeptide spanning residues 1–50 is cleaved from the precursor; the sequence is MMQDLINYFLSYPEVLKKLKNREACLIGFSSNETETIIKAYNDYHLSSPT. Trp-54 carries the post-translational modification Tryptophan derivative. Residue Trp-54 is the site of 3'-farnesyl-2',N2-cyclotryptophan attachment.

Interacts directly with the sensor histidine kinase ComP and stimulates its activity. Trp-54 is modified by farnesylation, which is essential for activity. Modified by the tryptophan prenyltransferase ComQ before export to the extracellular environment. The type of isoprenyl derivative differs among the different pherotypes and depends on ComX primary sequence.

The protein localises to the secreted. In terms of biological role, part of a major quorum-sensing system that regulates the development of genetic competence. Acts through the activation of the two-component regulatory system ComP/ComA composed of a sensor histidine kinase, ComP, and a response regulator, ComA. The polypeptide is ComX pheromone (Bacillus mojavensis).